The sequence spans 457 residues: Phosphoglucosamine mutase (457 aa).

S103 acts as the Phosphoserine intermediate in catalysis. 4 residues coordinate Mg(2+): S103, D244, D246, and D248. S103 is subject to Phosphoserine.

It belongs to the phosphohexose mutase family. Requires Mg(2+) as cofactor. Post-translationally, activated by phosphorylation.

The catalysed reaction is alpha-D-glucosamine 1-phosphate = D-glucosamine 6-phosphate. Functionally, catalyzes the conversion of glucosamine-6-phosphate to glucosamine-1-phosphate. This chain is Phosphoglucosamine mutase, found in Granulibacter bethesdensis (strain ATCC BAA-1260 / CGDNIH1).